The sequence spans 285 residues: Pantothenate synthetase (285 aa).

30 to 37 (MGNLHDGH) contributes to the ATP binding site. H37 serves as the catalytic Proton donor. Residue Q61 coordinates (R)-pantoate. Q61 lines the beta-alanine pocket. 148 to 151 (GEKD) contacts ATP. Q154 serves as a coordination point for (R)-pantoate. Position 185–188 (185–188 (RSSR)) interacts with ATP.

This sequence belongs to the pantothenate synthetase family. In terms of assembly, homodimer.

Its subcellular location is the cytoplasm. It catalyses the reaction (R)-pantoate + beta-alanine + ATP = (R)-pantothenate + AMP + diphosphate + H(+). It participates in cofactor biosynthesis; (R)-pantothenate biosynthesis; (R)-pantothenate from (R)-pantoate and beta-alanine: step 1/1. In terms of biological role, catalyzes the condensation of pantoate with beta-alanine in an ATP-dependent reaction via a pantoyl-adenylate intermediate. The protein is Pantothenate synthetase of Alcanivorax borkumensis (strain ATCC 700651 / DSM 11573 / NCIMB 13689 / SK2).